The chain runs to 496 residues: Ankyrin repeat domain-containing protein 34A (496 aa).

4 ANK repeats span residues 4–33 (TEGHALLRAVGQGKLRLARLLLEGGAYVNE), 37–72 (QGETALMAACRARYDDPQNKARMVRYLLEQGADPNI), 76–106 (LGRTALMHACAGGGGAAVASLLLAHGADPSV), and 110–139 (AGASALVHALDRGDRETLATLLDACKAKGT). Gln15 carries the N5-methylglutamine modification. Polar residues-rich tracts occupy residues 147–162 (DTSPSGTKKTRQYLNS) and 180–191 (FCTSPSEIQLQT). Residues 147 to 473 (DTSPSGTKKT…TKRKLVRRHS (327 aa)) are disordered. Basic and acidic residues predominate over residues 204–214 (AQEEEEKRDVF). Pro residues predominate over residues 218–233 (LPKPPDDPSPSEPLPK). Residues 234–243 (PPRHPPKPLK) show a composition bias toward basic residues. Position 316 is a phosphothreonine (Thr316). The span at 463–473 (RTKRKLVRRHS) shows a compositional bias: basic residues.

This sequence belongs to the ANKRD34 family. In terms of processing, methylated at Gln-15 by N6AMT1.

This is Ankyrin repeat domain-containing protein 34A (ANKRD34A) from Homo sapiens (Human).